A 162-amino-acid chain; its full sequence is Nucleotide-binding protein A2cp1_0112 (162 aa).

This sequence belongs to the YajQ family.

Its function is as follows. Nucleotide-binding protein. In Anaeromyxobacter dehalogenans (strain 2CP-1 / ATCC BAA-258), this protein is Nucleotide-binding protein A2cp1_0112.